The chain runs to 676 residues: Beta-galactosidase BgaP (676 aa).

Residue arginine 112 coordinates substrate. Residue cysteine 116 coordinates Zn(2+). Asparagine 150 provides a ligand contact to substrate. Glutamate 151 serves as the catalytic Proton donor. Residues cysteine 156, cysteine 158, and cysteine 161 each coordinate Zn(2+). Glutamate 308 serves as the catalytic Nucleophile. Substrate contacts are provided by residues tryptophan 316 and 356–359; that span reads EKYH.

Belongs to the glycosyl hydrolase 42 family. In terms of assembly, homodimer.

The enzyme catalyses Hydrolysis of terminal non-reducing beta-D-galactose residues in beta-D-galactosides.. No activity lost during treatment with 100 mM EDTA after 2 hours, and the addition of 1 mM MgCl(2), 1 mM CaCl(2) or 1 mM MnCl(2) has no effect. However, the enzyme activity is inhibited by Zn(2+), Cu(2+), Ni(2+) and Co(2+) to different extents. Addition of Na(+) or K(+) slightly stimulates the enzyme activity at low concentrations and the optimal concentration is 250 mM. A further increase of their concentration of ions above the optimum value results in a decrease in enzyme activity. The enzyme is still active even in the presence of Na(+) or K(+) at a concentration up to 5 M. Functionally, hydrolyzes lactose, o-nitrophenyl-beta-D-galactopyranoside (ONPG), p-nitrophenyl-beta-D-galactopyranoside (PNPG), 5-bromo-4-chloro-3-indolyl-beta-D-galactopyranoside (X-gal), o-nitrophenyl-beta-D-fucopyranoside, p-nitrophenyl-beta-D-mannoside, o-nitrophenyl-beta-D-glucoside, p-nitrophenyl-beta-D-xyloside, p-nitrophenyl-beta-D-cellobioside, p-nitrophenyl-beta-D-arabinoside, p-nitrophenyl-beta-D-lactoside, p-nitrophenyl-beta-D-galacturonide, p-nitrophenyl-beta-D-glucuronide and p-nitrophenyl-alpha-D-galactoside with highest level of activity with ONPG as substrate, intermediate level of activity with PNPG and lower levels of activity with all other chromogenic nitrophenyl analogs. Able to hydrolyze 34% of milk lactose after 60 minutes at 5 degrees Celsius. In Planococcus sp. (strain L4), this protein is Beta-galactosidase BgaP.